A 229-amino-acid polypeptide reads, in one-letter code: Small ribosomal subunit protein uS3c (229 aa).

In terms of domain architecture, KH type-2 spans 39–128 (LRDNLFKQYP…RIILTILKVQ (90 aa)).

This sequence belongs to the universal ribosomal protein uS3 family. As to quaternary structure, part of the 30S ribosomal subunit.

It localises to the plastid. The protein resides in the chloroplast. This is Small ribosomal subunit protein uS3c (rps3) from Tupiella akineta (Green alga).